The following is a 298-amino-acid chain: Bifunctional methyltransferase/endonuclease (298 aa).

A probable methylated-DNA--protein-cysteine methyltransferase region spans residues 1-79; the sequence is MQSIDLYSYL…SLGIDEKIRR (79 aa). Cysteine 56 is a catalytic residue. An endonuclease V region spans residues 80–298; the sequence is LRNDGIEINN…TVALRRNNII (219 aa). Aspartate 137 and aspartate 197 together coordinate Mg(2+).

This sequence in the N-terminal section; belongs to the MGMT family. In the C-terminal section; belongs to the endonuclease V family. It depends on Mg(2+) as a cofactor.

The protein resides in the cytoplasm. The catalysed reaction is Endonucleolytic cleavage at apurinic or apyrimidinic sites to products with a 5'-phosphate.. DNA repair enzyme involved in the repair of deaminated bases. Selectively cleaves double-stranded DNA at the second phosphodiester bond 3' to a deoxyinosine leaving behind the intact lesion on the nicked DNA. The sequence is that of Bifunctional methyltransferase/endonuclease from Picrophilus torridus (strain ATCC 700027 / DSM 9790 / JCM 10055 / NBRC 100828 / KAW 2/3).